We begin with the raw amino-acid sequence, 215 residues long: RNA pyrophosphohydrolase (215 aa).

The Nudix hydrolase domain occupies Gly6–Thr149. The Nudix box signature appears at Gly38 to Gly59.

Belongs to the Nudix hydrolase family. RppH subfamily. A divalent metal cation is required as a cofactor.

Its function is as follows. Accelerates the degradation of transcripts by removing pyrophosphate from the 5'-end of triphosphorylated RNA, leading to a more labile monophosphorylated state that can stimulate subsequent ribonuclease cleavage. In Burkholderia lata (strain ATCC 17760 / DSM 23089 / LMG 22485 / NCIMB 9086 / R18194 / 383), this protein is RNA pyrophosphohydrolase.